The primary structure comprises 195 residues: Putative nucleotidase BH1399 (195 aa).

The protein belongs to the 5'(3')-deoxyribonucleotidase family.

In Halalkalibacterium halodurans (strain ATCC BAA-125 / DSM 18197 / FERM 7344 / JCM 9153 / C-125) (Bacillus halodurans), this protein is Putative nucleotidase BH1399.